A 77-amino-acid polypeptide reads, in one-letter code: MKLIIFTGLVLFAIVSLIEVQADNERACLPQYQVCTDAPGNCCSNLVCDCYGRYKSGARIGRNCFCLQKGVIYKREN.

The N-terminal stretch at 1–20 (MKLIIFTGLVLFAIVSLIEV) is a signal peptide. A propeptide spanning residues 21 to 26 (QADNER) is cleaved from the precursor.

Belongs to the neurotoxin 19 (CSTX) family. 08 (U8-Lctx) subfamily. Post-translationally, contains 4 disulfide bonds. As to expression, expressed by the venom gland.

Its subcellular location is the secreted. This Lycosa singoriensis (Wolf spider) protein is U8-lycotoxin-Ls1f.